The following is a 137-amino-acid chain: Major seminal plasma glycoprotein PSP-II (137 aa).

An N-terminal signal peptide occupies residues 1 to 21 (MKLGTAIPWALLLSTATLVST). 2 cysteine pairs are disulfide-bonded: cysteine 30–cysteine 51 and cysteine 74–cysteine 95. A CUB domain is found at 30–131 (CGRVIKDTSG…SPFLIYFYGS (102 aa)). Asparagine 119 is a glycosylation site (N-linked (GlcNAc...) (complex) asparagine).

Monomer or heterodimer with PSP-I (depending on the type of glycosylation of PSP-I). Seminal plasma or sperm.

It localises to the secreted. This chain is Major seminal plasma glycoprotein PSP-II, found in Sus scrofa (Pig).